Consider the following 251-residue polypeptide: Octanoyltransferase (251 aa).

The BPL/LPL catalytic domain maps to 56–237 (ADTGDEIWVV…RLIANLDGES (182 aa)). Substrate-binding positions include 96–103 (RGGQITYH), 168–170 (ALG), and 181–183 (GLS). C199 serves as the catalytic Acyl-thioester intermediate.

The protein belongs to the LipB family.

The protein resides in the cytoplasm. It catalyses the reaction octanoyl-[ACP] + L-lysyl-[protein] = N(6)-octanoyl-L-lysyl-[protein] + holo-[ACP] + H(+). The protein operates within protein modification; protein lipoylation via endogenous pathway; protein N(6)-(lipoyl)lysine from octanoyl-[acyl-carrier-protein]: step 1/2. Its function is as follows. Catalyzes the transfer of endogenously produced octanoic acid from octanoyl-acyl-carrier-protein onto the lipoyl domains of lipoate-dependent enzymes. Lipoyl-ACP can also act as a substrate although octanoyl-ACP is likely to be the physiological substrate. The sequence is that of Octanoyltransferase from Burkholderia ambifaria (strain ATCC BAA-244 / DSM 16087 / CCUG 44356 / LMG 19182 / AMMD) (Burkholderia cepacia (strain AMMD)).